A 344-amino-acid chain; its full sequence is N-acetyl-gamma-glutamyl-phosphate reductase (344 aa).

Cys-150 is an active-site residue.

Belongs to the NAGSA dehydrogenase family. Type 1 subfamily.

It is found in the cytoplasm. It catalyses the reaction N-acetyl-L-glutamate 5-semialdehyde + phosphate + NADP(+) = N-acetyl-L-glutamyl 5-phosphate + NADPH + H(+). It functions in the pathway amino-acid biosynthesis; L-arginine biosynthesis; N(2)-acetyl-L-ornithine from L-glutamate: step 3/4. Functionally, catalyzes the NADPH-dependent reduction of N-acetyl-5-glutamyl phosphate to yield N-acetyl-L-glutamate 5-semialdehyde. This Ectopseudomonas mendocina (strain ymp) (Pseudomonas mendocina) protein is N-acetyl-gamma-glutamyl-phosphate reductase.